An 882-amino-acid polypeptide reads, in one-letter code: Valine--tRNA ligase (882 aa).

The 'HIGH' region motif lies at 45-55 (PNVTGKLHLGH). The short motif at 519 to 523 (KMSKS) is the 'KMSKS' region element. An ATP-binding site is contributed by lysine 522. Residues 808–882 (LADLLNVEEE…RIAEMKKIKS (75 aa)) adopt a coiled-coil conformation.

This sequence belongs to the class-I aminoacyl-tRNA synthetase family. ValS type 1 subfamily. In terms of assembly, monomer.

It is found in the cytoplasm. The enzyme catalyses tRNA(Val) + L-valine + ATP = L-valyl-tRNA(Val) + AMP + diphosphate. Functionally, catalyzes the attachment of valine to tRNA(Val). As ValRS can inadvertently accommodate and process structurally similar amino acids such as threonine, to avoid such errors, it has a 'posttransfer' editing activity that hydrolyzes mischarged Thr-tRNA(Val) in a tRNA-dependent manner. This chain is Valine--tRNA ligase, found in Streptococcus pyogenes serotype M28 (strain MGAS6180).